The following is a 643-amino-acid chain: Alpha-dioxygenase PIOX (643 aa).

The active-site Proton acceptor is H168. D169 provides a ligand contact to Ca(2+). H173 provides a ligand contact to heme b. 4 residues coordinate Ca(2+): T221, W223, D225, and S227. Residues H393, R490, and R494 each contribute to the heme b site.

This sequence belongs to the peroxidase family. Requires heme b as cofactor. The cofactor is Ca(2+).

The catalysed reaction is hexadecanoate + O2 = (2R)-2-hydroperoxyhexadecanoate. It catalyses the reaction dodecanoate + O2 = (2R)-2-hydroperoxydodecanoate. Functionally, alpha-dioxygenase that catalyzes the primary oxygenation step of a variety of 14-20 carbon fatty acids, containing up to three unsaturated bonds, into their corresponding 2R-hydroperoxides. Involved in the production of oxylipins that function in cell signaling, wound healing, and protection from infection. The alpha-oxidation pathway of fatty acids may play a role during plant developmental processes. The sequence is that of Alpha-dioxygenase PIOX from Pisum sativum (Garden pea).